The primary structure comprises 114 residues: MSIRLLCCVAFSLLWAGPVTAGITQAPTSQILAAGRSMTLRCTQDMRHNAMYWYRQDLGLGLRLIHYSNTAGTTGKGEVPDGYSVSRANTDDFPLTLASAVPSQTSVYFCASSD.

The first 21 residues, 1–21 (MSIRLLCCVAFSLLWAGPVTA), serve as a signal peptide directing secretion. Residues 22 to 114 (GITQAPTSQI…TSVYFCASSD (93 aa)) enclose the Ig-like domain. Cysteines 42 and 110 form a disulfide.

As to quaternary structure, alpha-beta TR is a heterodimer composed of an alpha and beta chain; disulfide-linked. The alpha-beta TR is associated with the transmembrane signaling CD3 coreceptor proteins to form the TR-CD3 (TcR or TCR). The assembly of alpha-beta TR heterodimers with CD3 occurs in the endoplasmic reticulum where a single alpha-beta TR heterodimer associates with one CD3D-CD3E heterodimer, one CD3G-CD3E heterodimer and one CD247 homodimer forming a stable octameric structure. CD3D-CD3E and CD3G-CD3E heterodimers preferentially associate with TR alpha and TR beta chains, respectively. The association of the CD247 homodimer is the last step of TcR assembly in the endoplasmic reticulum and is required for transport to the cell surface.

The protein localises to the cell membrane. In terms of biological role, v region of the variable domain of T cell receptor (TR) beta chain that participates in the antigen recognition. Alpha-beta T cell receptors are antigen specific receptors which are essential to the immune response and are present on the cell surface of T lymphocytes. Recognize peptide-major histocompatibility (MH) (pMH) complexes that are displayed by antigen presenting cells (APC), a prerequisite for efficient T cell adaptive immunity against pathogens. Binding of alpha-beta TR to pMH complex initiates TR-CD3 clustering on the cell surface and intracellular activation of LCK that phosphorylates the ITAM motifs of CD3G, CD3D, CD3E and CD247 enabling the recruitment of ZAP70. In turn ZAP70 phosphorylates LAT, which recruits numerous signaling molecules to form the LAT signalosome. The LAT signalosome propagates signal branching to three major signaling pathways, the calcium, the mitogen-activated protein kinase (MAPK) kinase and the nuclear factor NF-kappa-B (NF-kB) pathways, leading to the mobilization of transcription factors that are critical for gene expression and essential for T cell growth and differentiation. The T cell repertoire is generated in the thymus, by V-(D)-J rearrangement. This repertoire is then shaped by intrathymic selection events to generate a peripheral T cell pool of self-MH restricted, non-autoaggressive T cells. Post-thymic interaction of alpha-beta TR with the pMH complexes shapes TR structural and functional avidity. This is T cell receptor beta variable 6-4 from Homo sapiens (Human).